We begin with the raw amino-acid sequence, 602 residues long: Alpha-glucosides permease MPH3 (602 aa).

The Cytoplasmic segment spans residues 1–106 (MKNLSFLINR…AAAWSLLVST (106 aa)). Residues 107–127 (TLIMEGYDTAILGAFYALPIF) traverse the membrane as a helical segment. Residues 128 to 142 (QRKFGSQNDKTGEWE) lie on the Extracellular side of the membrane. The chain crosses the membrane as a helical span at residues 143 to 163 (ISASWQIGLTLCYMAGEIVGL). Over 164–178 (QLTGPSVDLVGNRYT) the chain is Cytoplasmic. A helical transmembrane segment spans residues 179–199 (LIIALFFLAAFTFILYFCNSL). Gly200 is a topological domain (extracellular). The chain crosses the membrane as a helical span at residues 201–221 (MIAVGQALCGMPWGCFQCLTV). Topologically, residues 222–234 (SYASEICPLALRY) are cytoplasmic. A helical transmembrane segment spans residues 235-255 (YLTTYSNLCWLFGQLFAAGIM). Residues 256-270 (KNSQKKYADSELGYK) are Extracellular-facing. The chain crosses the membrane as a helical span at residues 271-291 (LPFALQWILPVPLALGIFFAP). Over 292–363 (ESPWWLVKKG…EDKINRRRTR (72 aa)) the chain is Cytoplasmic. The helical transmembrane segment at 364 to 384 (ITCLCWAGQATCGSILIGYST) threads the bilayer. Topologically, residues 385–397 (YFYEKAGVSTEMS) are extracellular. Residues 398-418 (FTFSIIQYCLGICATFLSWWA) form a helical membrane-spanning segment. The Cytoplasmic portion of the chain corresponds to 419–426 (SKYFGRYD). Residues 427 to 447 (LYAFGLAFQTIVFFIIGGLGC) form a helical membrane-spanning segment. Over 448-459 (SSTHGSKMGSGS) the chain is Extracellular. The helical transmembrane segment at 460-480 (LLMAVAFFYNLGIAPVVFCLV) threads the bilayer. The Cytoplasmic segment spans residues 481 to 492 (SEMPSSRLRTKT). Residues 493–513 (IILARNTYNVVSIICSVLILY) traverse the membrane as a helical segment. Residues 514–525 (QLNSKKWNWGAK) are Extracellular-facing. Residues 526–546 (SGFFWGVLCFCTLIWAVVDLP) traverse the membrane as a helical segment. Over 547–602 (ETAGKTFVEINELFKLGVSARKFKSTKVDPFVVKNPPKDVSHNDPKGDIEASIAEE) the chain is Cytoplasmic. Residues 580-602 (KNPPKDVSHNDPKGDIEASIAEE) form a disordered region. Basic and acidic residues predominate over residues 582-595 (PPKDVSHNDPKGDI).

The protein belongs to the major facilitator superfamily. Sugar transporter (TC 2.A.1.1) family.

It is found in the cell membrane. Functionally, high-affinity uptake of maltose and maltotriose. Also transports alpha-methylglucoside, glucose and turanose but not melezitose or trehalose. This chain is Alpha-glucosides permease MPH3 (MPH3), found in Saccharomyces cerevisiae (strain AWRI1631) (Baker's yeast).